The sequence spans 282 residues: MSSYANHQALAGLTLGKSTDYRDTYDASLLQGVPRSLNRDPLGLKADNLPFHGTDIWTLYELSWLNAKGLPQVAVGHVELDYTSVNLIESKSFKLYLNSFNQTRFNNWDEVRQTLERDLSTCAQGKVSVALYRLDELEGQPIGHFNGTCIDDQDITIDNDEFTTDYLENATSGEKVVEETLVSHLLKSNCLITHQPDWGSIQIQYRGRQIDREKLLRYLVSFRHHNEFHEQCVERIFNDLLRFCQPEKLSVYARYTRRGGLDINPWRSNNDFVPSTTRLVRQ.

88-90 (IES) provides a ligand contact to substrate. 90–91 (SK) contacts NADPH. The Thioimide intermediate role is filled by Cys190. The active-site Proton donor is Asp197. Residue 229-230 (HE) participates in substrate binding. An NADPH-binding site is contributed by 258–259 (RG).

This sequence belongs to the GTP cyclohydrolase I family. QueF type 2 subfamily. Homodimer.

The protein resides in the cytoplasm. The enzyme catalyses 7-aminomethyl-7-carbaguanine + 2 NADP(+) = 7-cyano-7-deazaguanine + 2 NADPH + 3 H(+). Its pathway is tRNA modification; tRNA-queuosine biosynthesis. In terms of biological role, catalyzes the NADPH-dependent reduction of 7-cyano-7-deazaguanine (preQ0) to 7-aminomethyl-7-deazaguanine (preQ1). In Escherichia coli O127:H6 (strain E2348/69 / EPEC), this protein is NADPH-dependent 7-cyano-7-deazaguanine reductase.